The primary structure comprises 66 residues: Large ribosomal subunit protein bL33c (66 aa).

Belongs to the bacterial ribosomal protein bL33 family.

The protein resides in the plastid. The protein localises to the chloroplast. The sequence is that of Large ribosomal subunit protein bL33c from Cucumis sativus (Cucumber).